The primary structure comprises 131 residues: Probable calcium-binding protein CML34 (131 aa).

EF-hand domains follow at residues 1 to 33 (MSAK…FSPY), 34 to 69 (FTQE…MLKE), 70 to 97 (VFVF…LGKK), and 98 to 131 (FTEE…IGDI). The Ca(2+) site is built by D11, N13, D15, K17, E22, D47, D49, N51, E53, and E58. Ca(2+)-binding residues include D111, D113, D115, Y117, and E122.

Functionally, potential calcium sensor. The polypeptide is Probable calcium-binding protein CML34 (CML34) (Arabidopsis thaliana (Mouse-ear cress)).